The following is a 223-amino-acid chain: 2-C-methyl-D-erythritol 4-phosphate cytidylyltransferase (223 aa).

This sequence belongs to the IspD/TarI cytidylyltransferase family. IspD subfamily.

The catalysed reaction is 2-C-methyl-D-erythritol 4-phosphate + CTP + H(+) = 4-CDP-2-C-methyl-D-erythritol + diphosphate. The protein operates within isoprenoid biosynthesis; isopentenyl diphosphate biosynthesis via DXP pathway; isopentenyl diphosphate from 1-deoxy-D-xylulose 5-phosphate: step 2/6. In terms of biological role, catalyzes the formation of 4-diphosphocytidyl-2-C-methyl-D-erythritol from CTP and 2-C-methyl-D-erythritol 4-phosphate (MEP). The protein is 2-C-methyl-D-erythritol 4-phosphate cytidylyltransferase of Prochlorococcus marinus (strain AS9601).